The primary structure comprises 216 residues: Large ribosomal subunit protein uL4 (216 aa).

A disordered region spans residues 51 to 78 (KGRSEVHGSNTKPYKQKGTGRARRGDKK). The segment covering 64–76 (YKQKGTGRARRGD) has biased composition (basic residues).

This sequence belongs to the universal ribosomal protein uL4 family. In terms of assembly, part of the 50S ribosomal subunit.

Functionally, one of the primary rRNA binding proteins, this protein initially binds near the 5'-end of the 23S rRNA. It is important during the early stages of 50S assembly. It makes multiple contacts with different domains of the 23S rRNA in the assembled 50S subunit and ribosome. Forms part of the polypeptide exit tunnel. This Treponema pallidum (strain Nichols) protein is Large ribosomal subunit protein uL4.